Consider the following 314-residue polypeptide: Porphobilinogen deaminase (314 aa).

Cysteine 234 carries the post-translational modification S-(dipyrrolylmethanemethyl)cysteine.

This sequence belongs to the HMBS family. As to quaternary structure, monomer. It depends on dipyrromethane as a cofactor.

It carries out the reaction 4 porphobilinogen + H2O = hydroxymethylbilane + 4 NH4(+). Its pathway is porphyrin-containing compound metabolism; protoporphyrin-IX biosynthesis; coproporphyrinogen-III from 5-aminolevulinate: step 2/4. Functionally, tetrapolymerization of the monopyrrole PBG into the hydroxymethylbilane pre-uroporphyrinogen in several discrete steps. This is Porphobilinogen deaminase from Mycobacterium marinum (strain ATCC BAA-535 / M).